We begin with the raw amino-acid sequence, 473 residues long: Catalase easC (473 aa).

Residues 1 to 15 (MASEVSVASSGSEHS) show a composition bias toward low complexity. The segment at 1-31 (MASEVSVASSGSEHSGAQKCPFQDPGLSSMD) is disordered. His-54 is an active-site residue. Position 344 (Tyr-344) interacts with heme. A disordered region spans residues 369–388 (DGARPEKAEMAPQKVPSQEH).

Belongs to the catalase family. Heme serves as cofactor.

Its pathway is alkaloid biosynthesis; ergot alkaloid biosynthesis. Functionally, catalase; part of the gene cluster that mediates the biosynthesis of fungal ergot alkaloid. DmaW catalyzes the first step of ergot alkaloid biosynthesis by condensing dimethylallyl diphosphate (DMAP) and tryptophan to form 4-dimethylallyl-L-tryptophan. The second step is catalyzed by the methyltransferase easF that methylates 4-dimethylallyl-L-tryptophan in the presence of S-adenosyl-L-methionine, resulting in the formation of 4-dimethylallyl-L-abrine. The catalase easC and the FAD-dependent oxidoreductase easE then transform 4-dimethylallyl-L-abrine to chanoclavine-I which is further oxidized by easD in the presence of NAD(+), resulting in the formation of chanoclavine-I aldehyde. Agroclavine dehydrogenase easG then mediates the conversion of chanoclavine-I aldehyde to agroclavine via a non-enzymatic adduct reaction: the substrate is an iminium intermediate that is formed spontaneously from chanoclavine-I aldehyde in the presence of glutathione. The presence of easA is not required to complete this reaction. Further conversion of agroclavine to paspalic acid is a two-step process involving oxidation of agroclavine to elymoclavine and of elymoclavine to paspalic acid, the second step being performed by the elymoclavine oxidase cloA. Paspalic acid is then further converted to D-lysergic acid. Ergopeptines are assembled from D-lysergic acid and three different amino acids by the D-lysergyl-peptide-synthetases composed each of a monomudular and a trimodular nonribosomal peptide synthetase subunit. LpsB and lpsC encode the monomodular subunits responsible for D-lysergic acid activation and incorporation into the ergopeptine backbone. LpsA1 and A2 subunits encode the trimodular nonribosomal peptide synthetase assembling the tripeptide portion of ergopeptines. LpsA1 is responsible for formation of the major ergopeptine, ergotamine, and lpsA2 for alpha-ergocryptine, the minor ergopeptine of the total alkaloid mixture elaborated by C.purpurea. D-lysergyl-tripeptides are assembled by the nonribosomal peptide synthetases and released as N-(D-lysergyl-aminoacyl)-lactams. Cyclolization of the D-lysergyl-tripeptides is performed by the Fe(2+)/2-ketoglutarate-dependent dioxygenase easH which introduces a hydroxyl group into N-(D-lysergyl-aminoacyl)-lactam at alpha-C of the aminoacyl residue followed by spontaneous condensation with the terminal lactam carbonyl group. This chain is Catalase easC, found in Claviceps purpurea (Ergot fungus).